The following is a 405-amino-acid chain: MTVLSEQDKIRLLADIVKIQTENDHEIEVCEYLKDLLSQYDIDSKIVKVNDSRANLVAEIGSGAPVLAISGHMDVVDAGDHDDWTFPPFELTDKDGKLFGRGTTDMKGGLMAMVIAMIELKQSNALKQGTIRLLATTGEETEQYGAQLLADEGYLDDVSGLIIGEPTSNIAYYAHKGSMSCVVTAKGKAAHSSMPHLGTNAVDILVDFVNEMKQEYKNIKEHDKVHELDAVPMIEKHLHRKIGEEESHIYSGFVMLNSVFNGGKQVNSVPHKATAKYNVRTVPEYDSTFVKDLFEKVIRHVGENYLTVDIPSSHDPVASDRDNPLIQNITRIAPNYVHEDIVVSALIGTTDASSFLGTNENNVDFAVFGPGESIMAHQVDEFIRKDMYLSYIDVYKDVFKAYLEK.

Residue His72 participates in Zn(2+) binding. Asp74 is an active-site residue. Asp105 provides a ligand contact to Zn(2+). Residue Glu139 is the Proton acceptor of the active site. Glu140, Glu165, and His377 together coordinate Zn(2+).

The protein belongs to the peptidase M20A family. The cofactor is Zn(2+). Co(2+) is required as a cofactor.

The catalysed reaction is N-succinyl-(2S,6S)-2,6-diaminopimelate + H2O = (2S,6S)-2,6-diaminopimelate + succinate. It functions in the pathway amino-acid biosynthesis; L-lysine biosynthesis via DAP pathway; LL-2,6-diaminopimelate from (S)-tetrahydrodipicolinate (succinylase route): step 3/3. This is Probable succinyl-diaminopimelate desuccinylase (dapE) from Staphylococcus epidermidis (strain ATCC 12228 / FDA PCI 1200).